The following is a 957-amino-acid chain: Dystrophin-related protein 2 (957 aa).

Spectrin repeat units lie at residues 102–179 and 231–337; these read DLSG…EELE and EHLL…QLQD. The 26-residue stretch at 358 to 383 folds into the WW domain; that stretch reads WERAISPNKVPYYINHQAQTTCWDHP. Residues 605 to 661 form a ZZ-type; degenerate zinc finger; the sequence is KHQTKCSICRQCPIKGFRYRSLKQFNVDICQTCFLTGRASKGNKLHYPIMEYYTPTT. Zn(2+)-binding residues include C610, C613, C634, and C637. Residue S748 is modified to Phosphoserine. Residues 876-894 are compositionally biased toward low complexity; that stretch reads QPPSESDGNGSAGSSLASS. A disordered region spans residues 876 to 923; the sequence is QPPSESDGNGSAGSSLASSPRQSEGSHPREKGQTTPDTEVADDVGSKS. T910 carries the phosphothreonine modification.

In terms of assembly, interacts with PRX; this enhances phosphorylation. Identified in a dystroglycan complex that contains at least PRX, DRP2, UTRN, DMD and DAG1. As to expression, detected in quadriceps nerve Schwann cells. Detected in sciatic nerve. Detected in trigeminal nerve Schwann cells (at protein level). Detected in brain and spinal cord.

The protein resides in the postsynaptic density. The protein localises to the cell projection. Its subcellular location is the dendrite. It is found in the perikaryon. It localises to the cell membrane. In terms of biological role, required for normal myelination and for normal organization of the cytoplasm and the formation of Cajal bands in myelinating Schwann cells. Required for normal PRX location at appositions between the abaxonal surface of the myelin sheath and the Schwann cell plasma membrane. Possibly involved in membrane-cytoskeleton interactions of the central nervous system. This is Dystrophin-related protein 2 (Drp2) from Mus musculus (Mouse).